Consider the following 484-residue polypeptide: 6-phosphogluconate dehydrogenase, decarboxylating (484 aa).

Residues 10 to 15, 33 to 35, 75 to 77, and Asn-103 contribute to the NADP(+) site; these read GLAVMG, NRT, and IKA. Residues Asn-103 and 129–131 contribute to the substrate site; that span reads SGG. Lys-183 (proton acceptor) is an active-site residue. Residue 186–187 participates in substrate binding; sequence HN. The active-site Proton donor is Glu-190. The substrate site is built by Tyr-191, Lys-260, Arg-287, Arg-448, and His-454.

The protein belongs to the 6-phosphogluconate dehydrogenase family. In terms of assembly, homodimer.

It catalyses the reaction 6-phospho-D-gluconate + NADP(+) = D-ribulose 5-phosphate + CO2 + NADPH. The protein operates within carbohydrate degradation; pentose phosphate pathway; D-ribulose 5-phosphate from D-glucose 6-phosphate (oxidative stage): step 3/3. Catalyzes the oxidative decarboxylation of 6-phosphogluconate to ribulose 5-phosphate and CO(2), with concomitant reduction of NADP to NADPH. The polypeptide is 6-phosphogluconate dehydrogenase, decarboxylating (Caenorhabditis elegans).